The following is an 80-amino-acid chain: NAD(P)H-quinone oxidoreductase subunit O (80 aa).

It belongs to the complex I NdhO subunit family. In terms of assembly, NDH-1 can be composed of about 15 different subunits; different subcomplexes with different compositions have been identified which probably have different functions.

The protein localises to the cellular thylakoid membrane. It carries out the reaction a plastoquinone + NADH + (n+1) H(+)(in) = a plastoquinol + NAD(+) + n H(+)(out). The enzyme catalyses a plastoquinone + NADPH + (n+1) H(+)(in) = a plastoquinol + NADP(+) + n H(+)(out). Functionally, NDH-1 shuttles electrons from an unknown electron donor, via FMN and iron-sulfur (Fe-S) centers, to quinones in the respiratory and/or the photosynthetic chain. The immediate electron acceptor for the enzyme in this species is believed to be plastoquinone. Couples the redox reaction to proton translocation, and thus conserves the redox energy in a proton gradient. Cyanobacterial NDH-1 also plays a role in inorganic carbon-concentration. In Prochlorococcus marinus (strain MIT 9515), this protein is NAD(P)H-quinone oxidoreductase subunit O.